The primary structure comprises 272 residues: NH(3)-dependent NAD(+) synthetase (272 aa).

An ATP-binding site is contributed by 45–52 (GISGGQDS). Asp51 contacts Mg(2+). Arg138 contributes to the deamido-NAD(+) binding site. Residue Thr158 coordinates ATP. Glu163 serves as a coordination point for Mg(2+). Residues Lys171 and Asp178 each contribute to the deamido-NAD(+) site. ATP is bound by residues Lys187 and Thr209. A deamido-NAD(+)-binding site is contributed by 258–259 (HK).

Belongs to the NAD synthetase family. In terms of assembly, homodimer.

The enzyme catalyses deamido-NAD(+) + NH4(+) + ATP = AMP + diphosphate + NAD(+) + H(+). The protein operates within cofactor biosynthesis; NAD(+) biosynthesis; NAD(+) from deamido-NAD(+) (ammonia route): step 1/1. Catalyzes the ATP-dependent amidation of deamido-NAD to form NAD. Uses ammonia as a nitrogen source. This chain is NH(3)-dependent NAD(+) synthetase, found in Bacillus velezensis (strain DSM 23117 / BGSC 10A6 / LMG 26770 / FZB42) (Bacillus amyloliquefaciens subsp. plantarum).